Consider the following 278-residue polypeptide: Neuronal membrane glycoprotein M6-a (278 aa).

Met1 is subject to N-acetylmethionine. Residues 1–22 (MEENMEEGQTQKGCFECCIKCL) lie on the Cytoplasmic side of the membrane. A helical transmembrane segment spans residues 23–43 (GGIPYASLIATILLYAGVALF). Topologically, residues 44–84 (CGCGHEALSGTVNILQTYFEMARTAGDTLDVFTMIDIFKYV) are extracellular. A helical membrane pass occupies residues 85-105 (IYGIAAAFFVYGILLMVEGFF). Residues 106 to 127 (TTGAIKDLYGDFKITTCGRCVS) lie on the Cytoplasmic side of the membrane. A helical membrane pass occupies residues 128–148 (AWFIMLTYLFMLAWLGVTAFT). Residues 149-213 (SLPVYMYFNV…STELNMTFHL (65 aa)) lie on the Extracellular side of the membrane. An N-linked (GlcNAc...) asparagine glycan is attached at Asn164. A disulfide bridge links Cys174 with Cys192. N-linked (GlcNAc...) asparagine glycosylation is present at Asn208. The helical transmembrane segment at 214-234 (FIVALAGAGAAVIAMVHYLMV) threads the bilayer. At 235 to 278 (LSANWAYVKDACRMQKYEDIKSKEEQELHDIHSTRSKERLNAYT) the chain is on the cytoplasmic side. Position 256 is a phosphoserine (Ser256). Thr278 carries the post-translational modification Phosphothreonine.

This sequence belongs to the myelin proteolipid protein family. As to quaternary structure, interacts with OPRM1. Interacts with palmitoyltransferase ZDHHC17/HIP14; the interaction leads to palmitoylation of GPM6A. In terms of processing, N-glycosylated. Post-translationally, palmitoylated by ZDHHC17/HIP14. In terms of tissue distribution, expressed in hippocampus (at protein level). Isoform 1 is the predominant isoform expressed in brain, specifically in hippocampus. Isoform 2 is expressed at low levels in brain and kidney.

The protein resides in the cell membrane. It localises to the cell projection. It is found in the axon. Its subcellular location is the growth cone. The protein localises to the dendritic spine. The protein resides in the filopodium. It localises to the neuron projection. Involved in neuronal differentiation, including differentiation and migration of neuronal stem cells. Plays a role in neuronal plasticity and is involved in neurite and filopodia outgrowth, filopodia motility and probably synapse formation. Gpm6a-induced filopodia formation involves mitogen-activated protein kinase (MAPK) and Src signaling pathways. May be involved in neuronal NGF-dependent Ca(2+) influx. May be involved in regulation of endocytosis and intracellular trafficking of G-protein-coupled receptors (GPCRs); enhances internalization and recycling of mu-type opioid receptor. The sequence is that of Neuronal membrane glycoprotein M6-a (Gpm6a) from Rattus norvegicus (Rat).